The primary structure comprises 382 residues: Anhydro-N-acetylmuramic acid kinase (382 aa).

9–16 (GTSLDGID) contributes to the ATP binding site.

The protein belongs to the anhydro-N-acetylmuramic acid kinase family.

It catalyses the reaction 1,6-anhydro-N-acetyl-beta-muramate + ATP + H2O = N-acetyl-D-muramate 6-phosphate + ADP + H(+). It functions in the pathway amino-sugar metabolism; 1,6-anhydro-N-acetylmuramate degradation. The protein operates within cell wall biogenesis; peptidoglycan recycling. Its function is as follows. Catalyzes the specific phosphorylation of 1,6-anhydro-N-acetylmuramic acid (anhMurNAc) with the simultaneous cleavage of the 1,6-anhydro ring, generating MurNAc-6-P. Is required for the utilization of anhMurNAc either imported from the medium or derived from its own cell wall murein, and thus plays a role in cell wall recycling. In Bacillus cereus (strain Q1), this protein is Anhydro-N-acetylmuramic acid kinase.